Reading from the N-terminus, the 1141-residue chain is Collagen alpha-1(XXVIII) chain (1141 aa).

Positions 1–20 are cleaved as a signal peptide; it reads MRRRDVAFCLLLLPAFMTQA. One can recognise a VWFA 1 domain in the interval 48–227; that stretch reads DVVFILDSSE…TLVDRIQERL (180 aa). Positions 242-770 are disordered; the sequence is CEKGEPGDPG…KQGLQGPKGD (529 aa). 5 Collagen-like domains span residues 243-300, 301-358, 501-544, 545-588, and 733-769; these read EKGE…RGEC, GKPG…GAPG, GPKG…MPGK, GQPG…MPGA, and GQKGEHGDRGDVGRKGEKGETGEPGSPGKQGLQGPKG. Basic and acidic residues predominate over residues 291-311; sequence KGDKGERGECGKPGMKGDKGP. A compositionally biased stretch (low complexity) spans 335–344; it reads PKGFQGNKGE. Residues 345-356 are compositionally biased toward pro residues; that stretch reads PGPPGPYGPPGA. Residues 735-753 show a composition bias toward basic and acidic residues; the sequence is KGEHGDRGDVGRKGEKGET. A VWFA 2 domain is found at 798 to 976; that stretch reads ELVFVIDSSE…TLQDTLKQKL (179 aa). The BPTI/Kunitz inhibitor domain maps to 1088-1138; that stretch reads CEEALKPGECGDYVVRWYYDKQVNSCARFWFSGCNGSGNRFHSEKECRETC. 3 disulfide bridges follow: C1088/C1138, C1097/C1121, and C1113/C1134.

The protein belongs to the VWA-containing collagen family. As to quaternary structure, trimer or homomer. Secreted into as a 135 kDa monomer under reducing conditions and as a homotrimer under non-reducing conditions. In terms of tissue distribution, expressed in skin, intestine, sternum, brain and kidney. Lower expression is also observed in heart, lung, sciatic nerve, dorsal root ganglia, peripheral nerves and calvaria of newborn mice and in intestine and brain of adult mice. Found in basement membrane surrounding a particular subset of Schwann cells in adult sciatic nerve.

It is found in the secreted. It localises to the extracellular space. The protein localises to the extracellular matrix. The protein resides in the basement membrane. Its function is as follows. May act as a cell-binding protein. This Mus musculus (Mouse) protein is Collagen alpha-1(XXVIII) chain (Col28a1).